A 311-amino-acid chain; its full sequence is Aspartate carbamoyltransferase catalytic subunit (311 aa).

Carbamoyl phosphate-binding residues include R55 and T56. K85 is an L-aspartate binding site. Carbamoyl phosphate contacts are provided by R106, H135, and Q138. L-aspartate is bound by residues R168 and R230. The carbamoyl phosphate site is built by L268 and P269.

This sequence belongs to the aspartate/ornithine carbamoyltransferase superfamily. ATCase family. As to quaternary structure, heterododecamer (2C3:3R2) of six catalytic PyrB chains organized as two trimers (C3), and six regulatory PyrI chains organized as three dimers (R2).

The enzyme catalyses carbamoyl phosphate + L-aspartate = N-carbamoyl-L-aspartate + phosphate + H(+). Its pathway is pyrimidine metabolism; UMP biosynthesis via de novo pathway; (S)-dihydroorotate from bicarbonate: step 2/3. In terms of biological role, catalyzes the condensation of carbamoyl phosphate and aspartate to form carbamoyl aspartate and inorganic phosphate, the committed step in the de novo pyrimidine nucleotide biosynthesis pathway. In Escherichia coli O139:H28 (strain E24377A / ETEC), this protein is Aspartate carbamoyltransferase catalytic subunit.